Reading from the N-terminus, the 157-residue chain is Phosphopantetheine adenylyltransferase (157 aa).

Ser-8 contacts substrate. ATP contacts are provided by residues 8 to 9 (SF) and His-16. Substrate-binding residues include Lys-40, Thr-72, and Arg-86. Residues 87–89 (GLR), Glu-97, and 122–128 (YSFLSSS) contribute to the ATP site.

It belongs to the bacterial CoaD family. In terms of assembly, homohexamer. It depends on Mg(2+) as a cofactor.

The protein resides in the cytoplasm. It catalyses the reaction (R)-4'-phosphopantetheine + ATP + H(+) = 3'-dephospho-CoA + diphosphate. It participates in cofactor biosynthesis; coenzyme A biosynthesis; CoA from (R)-pantothenate: step 4/5. Reversibly transfers an adenylyl group from ATP to 4'-phosphopantetheine, yielding dephospho-CoA (dPCoA) and pyrophosphate. The chain is Phosphopantetheine adenylyltransferase from Gloeothece citriformis (strain PCC 7424) (Cyanothece sp. (strain PCC 7424)).